A 65-amino-acid polypeptide reads, in one-letter code: Small ribosomal subunit protein bS21 (65 aa).

This sequence belongs to the bacterial ribosomal protein bS21 family.

This Chlorobium chlorochromatii (strain CaD3) protein is Small ribosomal subunit protein bS21.